Here is a 182-residue protein sequence, read N- to C-terminus: IQ domain-containing protein F1 (182 aa).

2 stretches are compositionally biased toward basic and acidic residues: residues methionine 1–glutamate 10 and glutamate 31–leucine 43. The segment at methionine 1–leucine 43 is disordered. 2 IQ domains span residues glutamate 45 to isoleucine 74 and glutamate 101 to threonine 130.

In terms of assembly, interacts with calmodulin. Specifically expressed in testes and mature spermatozoa (at protein level).

The protein localises to the cytoplasmic vesicle. Its subcellular location is the secretory vesicle. It localises to the acrosome. In terms of biological role, involved in sperm capacitation and acrosome reaction. In Mus musculus (Mouse), this protein is IQ domain-containing protein F1.